A 703-amino-acid polypeptide reads, in one-letter code: Stonustoxin subunit alpha (703 aa).

The tract at residues 2-265 (SSDLVMPALG…KAQQLIQEIN (264 aa)) is structural MACPF/CDC pore-forming domain. Residues 266–385 (VSKVRRIHTT…GMVEGTQAKF (120 aa)) form a structural FAT domain region. Positions 386 to 517 (VSNQTELDRE…PRMPFVQGYK (132 aa)) are thioredoxin (THX) domain. A B30.2/SPRY domain is found at 508–703 (PRMPFVQGYK…AGNHGTLRLL (196 aa)).

Belongs to the SNTX/VTX toxin family. As to quaternary structure, heterodimer of alpha and beta subunits; non-covalently linked. In terms of processing, intrachain disulfide bonds may be present in the heterodimer. Post-translationally, not glycosylated. In terms of tissue distribution, expressed by the venom gland.

It is found in the secreted. Functionally, this lethal (towards mammals) heterodimer induces hemolytic activities due to its ability to form pores in the cell membrane. The pore may be composed of 10 SNTX-alpha/beta heterodimers. The toxin elicits potent hypotension which is endothelium-dependent and appears to be mediated by the nitric oxide pathway and activation of potassium channels. In addition, it displays edema-inducing activities, increases vascular permeability. It also shows myotoxic activities and interferes irreversibly with neuromuscular function. It also induces irreversible platelet aggregation in rabbit or rat (but not in human or mouse) whole blood. In addition, it has been observed to increase spontaneous quantal acetylcholine release from isolated frog cutaneous pectoris motor endings. The protein is Stonustoxin subunit alpha of Synanceia horrida (Estuarine stonefish).